Reading from the N-terminus, the 561-residue chain is Rho guanine nucleotide exchange factor 9 (561 aa).

The SH3 domain maps to 53 to 112; sequence DSIVSAEAVWDHVTMANRELAFKAGDVIKVLDASNKDWWWGQIDDEEGWFPASFVRLWVN. An interaction with GPHN region spans residues 145–155; sequence RDQMRANVINE. The DH domain occupies 148 to 332; the sequence is MRANVINEIM…RNVTQQINER (185 aa). Positions 363-470 constitute a PH domain; that stretch reads ELIYTGEMAW…WLRAFREERK (108 aa). A disordered region spans residues 499 to 524; it reads KQKGVNSARSVPPSYPPPQDPLNQGQ. The residue at position 547 (serine 547) is a Phosphoserine.

As to quaternary structure, interacts with GPHN.

It localises to the cytoplasm. The protein localises to the postsynaptic density. Its function is as follows. Acts as a guanine nucleotide exchange factor (GEF) for CDC42. Promotes formation of GPHN clusters. The polypeptide is Rho guanine nucleotide exchange factor 9 (ARHGEF9) (Bos taurus (Bovine)).